Consider the following 230-residue polypeptide: 5'-methylthioadenosine/S-adenosylhomocysteine nucleosidase (230 aa).

Residue glutamate 12 is the Proton acceptor of the active site. Residues glycine 78, isoleucine 153, and 174-175 contribute to the substrate site; that span reads ME. Aspartate 198 serves as the catalytic Proton donor.

Belongs to the PNP/UDP phosphorylase family. MtnN subfamily.

It carries out the reaction S-adenosyl-L-homocysteine + H2O = S-(5-deoxy-D-ribos-5-yl)-L-homocysteine + adenine. It catalyses the reaction S-methyl-5'-thioadenosine + H2O = 5-(methylsulfanyl)-D-ribose + adenine. The catalysed reaction is 5'-deoxyadenosine + H2O = 5-deoxy-D-ribose + adenine. It functions in the pathway amino-acid biosynthesis; L-methionine biosynthesis via salvage pathway; S-methyl-5-thio-alpha-D-ribose 1-phosphate from S-methyl-5'-thioadenosine (hydrolase route): step 1/2. Functionally, catalyzes the irreversible cleavage of the glycosidic bond in both 5'-methylthioadenosine (MTA) and S-adenosylhomocysteine (SAH/AdoHcy) to adenine and the corresponding thioribose, 5'-methylthioribose and S-ribosylhomocysteine, respectively. Also cleaves 5'-deoxyadenosine, a toxic by-product of radical S-adenosylmethionine (SAM) enzymes, into 5-deoxyribose and adenine. This is 5'-methylthioadenosine/S-adenosylhomocysteine nucleosidase from Shewanella loihica (strain ATCC BAA-1088 / PV-4).